A 561-amino-acid chain; its full sequence is Microtubule-associated protein VP6 (561 aa).

In terms of assembly, interacts with VP2.

The protein localises to the virion. The protein resides in the host cytoplasm. It localises to the host cytoskeleton. In terms of biological role, minor inner capsid component. Displays NTPase and RNA 5'-triphosphatase (RTPase) activities. May function as a cofactor of polymerase VP2. Associates with microtubules and plays a role in the formation, structural organization and morphology of viral inclusions, where the assembly of cores and the replication of viral RNA occur. The sequence is that of Microtubule-associated protein VP6 (S6) from Lymantria dispar cypovirus 1 (isolate Rao) (LdCPV-1).